The following is a 37-amino-acid chain: Alpha-conotoxin LvIA (37 aa).

Residues 1 to 20 constitute a propeptide that is removed on maturation; it reads FRGRDAAAKASGLVGLTDRR. 2 disulfide bridges follow: Cys-22–Cys-28 and Cys-23–Cys-36. The segment at 24 to 26 is ser-Xaa-Pro motif, crucial for potent interaction with nAChR; it reads SHP. At Cys-36 the chain carries Cysteine amide.

Belongs to the conotoxin A superfamily. In terms of tissue distribution, expressed by the venom duct.

Its subcellular location is the secreted. In terms of biological role, alpha-conotoxins act on postsynaptic membranes, they bind to the nicotinic acetylcholine receptors (nAChR) and thus inhibit them. This toxin blocks alpha-3-beta-2/CHRNA3-CHRNB2 nAChR with high selectivity (IC(50)=8.67 nM (on rat) and 17.5 (on human)). Also has weaker activity on alpha-6/alpha-3-beta-2-beta-3 (CHRNA6/CHRNA3-CHRNB2-CHRNB3) (IC(50)=108 nM (on rat)), alpha-6/alpha-3-beta-4 (CHRNA6/CHRNA3-CHRNB4) (IC(50)=121 nM (on rat)), alpha-3-beta-4 (CHRNA3-CHRNB4) (IC(50)=148 nM (on rat)), and alpha-7/CHRNA7 nAChRs (IC(50)=3000 nM (on rat)). When tested on mouse with hot-plate tests, this toxin significantly increases the base pain threshold and shows analgesic effects. The protein is Alpha-conotoxin LvIA of Conus lividus (Livid cone).